We begin with the raw amino-acid sequence, 379 residues long: Cytochrome b (379 aa).

Helical transmembrane passes span 33–53 (FGSLLGMCLMIQILTGLFLAM), 77–98 (WLIRYLHANGASMFFICLFIHV), 113–133 (WNIGIILFLTTMATAFVGYVL), and 178–198 (FFAFHFILPFIITAFVLVHLL). Residues H83 and H97 each contribute to the heme b site. Heme b is bound by residues H182 and H196. H201 is an a ubiquinone binding site. A run of 4 helical transmembrane segments spans residues 226–246 (IKDLLGILFLLTALMILALFF), 288–308 (LGGVLALLLSILILMAFPLLN), 320–340 (ITQTIYWILIANLLVLTWIGG), and 347–367 (FTMIGQIASITYFAIILILXP).

Belongs to the cytochrome b family. The cytochrome bc1 complex contains 11 subunits: 3 respiratory subunits (MT-CYB, CYC1 and UQCRFS1), 2 core proteins (UQCRC1 and UQCRC2) and 6 low-molecular weight proteins (UQCRH/QCR6, UQCRB/QCR7, UQCRQ/QCR8, UQCR10/QCR9, UQCR11/QCR10 and a cleavage product of UQCRFS1). This cytochrome bc1 complex then forms a dimer. Heme b is required as a cofactor.

The protein localises to the mitochondrion inner membrane. Functionally, component of the ubiquinol-cytochrome c reductase complex (complex III or cytochrome b-c1 complex) that is part of the mitochondrial respiratory chain. The b-c1 complex mediates electron transfer from ubiquinol to cytochrome c. Contributes to the generation of a proton gradient across the mitochondrial membrane that is then used for ATP synthesis. This is Cytochrome b (MT-CYB) from Akodon toba (Chaco grass mouse).